The primary structure comprises 705 residues: Choline transporter-like protein 2 (705 aa).

The Cytoplasmic portion of the chain corresponds to methionine 1 to aspartate 33. Threonine 14 is modified (phosphothreonine). A helical membrane pass occupies residues isoleucine 34 to alanine 54. The Extracellular segment spans residues tryptophan 55–tryptophan 232. 2 N-linked (GlcNAc...) asparagine glycosylation sites follow: asparagine 187 and asparagine 200. Residues tyrosine 233 to leucine 253 form a helical membrane-spanning segment. Residues arginine 254–leucine 256 lie on the Cytoplasmic side of the membrane. A helical membrane pass occupies residues alanine 257 to phenylalanine 277. Residues histidine 278–tryptophan 315 lie on the Extracellular side of the membrane. Residues methionine 316–leucine 336 form a helical membrane-spanning segment. Residues arginine 337 to proline 364 lie on the Cytoplasmic side of the membrane. A helical membrane pass occupies residues leucine 365–leucine 385. At serine 386–phenylalanine 453 the chain is on the extracellular side. N-linked (GlcNAc...) asparagine glycosylation is present at asparagine 416. The chain crosses the membrane as a helical span at residues tryptophan 454–tryptophan 476. Residues alanine 477 to serine 503 lie on the Cytoplasmic side of the membrane. A helical transmembrane segment spans residues leucine 504 to leucine 524. Residues aspartate 525 to tyrosine 562 lie on the Extracellular side of the membrane. The chain crosses the membrane as a helical span at residues isoleucine 563–leucine 583. The Cytoplasmic segment spans residues methionine 584–aspartate 598. A helical transmembrane segment spans residues phenylalanine 599–phenylalanine 619. Topologically, residues phenylalanine 620–tyrosine 637 are extracellular. The helical transmembrane segment at tryptophan 638–valine 658 threads the bilayer. Residues tyrosine 659–serine 705 are Cytoplasmic-facing.

Belongs to the CTL (choline transporter-like) family. As to quaternary structure, interacts with COCH. N-glycosylated.

It is found in the cell membrane. The protein localises to the mitochondrion outer membrane. It catalyses the reaction choline(out) + n H(+)(in) = choline(in) + n H(+)(out). The enzyme catalyses ethanolamine(out) + n H(+)(in) = ethanolamine(in) + n H(+)(out). Exhibits choline transporter activity, as choline/H+ antiporter. Also acts as a low-affinity ethanolamine/H+ antiporter, regulating the supply of extracellular ethanolamine (Etn) for the CDP-Etn pathway, redistribute intracellular Etn and balance the CDP-Cho and CDP-Etn arms of the Kennedy pathway. The sequence is that of Choline transporter-like protein 2 (Slc44a2) from Rattus norvegicus (Rat).